The following is a 163-amino-acid chain: Urease accessory protein UreE (163 aa).

The segment at Glu-134–Glu-163 is disordered.

This sequence belongs to the UreE family.

It localises to the cytoplasm. In terms of biological role, involved in urease metallocenter assembly. Binds nickel. Probably functions as a nickel donor during metallocenter assembly. This chain is Urease accessory protein UreE, found in Methylobacillus flagellatus (strain ATCC 51484 / DSM 6875 / VKM B-1610 / KT).